The chain runs to 152 residues: Xanthine-guanine phosphoribosyltransferase (152 aa).

Residues 37–38, Arg-69, and 88–96 contribute to the 5-phospho-alpha-D-ribose 1-diphosphate site; these read RG and DDLVDTGGT. GMP is bound at residue Arg-69. Asp-89 is a Mg(2+) binding site. Residues Asp-92 and Ile-135 each contribute to the guanine site. Xanthine is bound by residues Asp-92 and Ile-135. Residues 92-96 and 134-135 each bind GMP; these read DTGGT and WI.

This sequence belongs to the purine/pyrimidine phosphoribosyltransferase family. XGPT subfamily. In terms of assembly, homotetramer. Mg(2+) is required as a cofactor.

The protein localises to the cell inner membrane. It carries out the reaction GMP + diphosphate = guanine + 5-phospho-alpha-D-ribose 1-diphosphate. The catalysed reaction is XMP + diphosphate = xanthine + 5-phospho-alpha-D-ribose 1-diphosphate. The enzyme catalyses IMP + diphosphate = hypoxanthine + 5-phospho-alpha-D-ribose 1-diphosphate. It participates in purine metabolism; GMP biosynthesis via salvage pathway; GMP from guanine: step 1/1. Its pathway is purine metabolism; XMP biosynthesis via salvage pathway; XMP from xanthine: step 1/1. In terms of biological role, purine salvage pathway enzyme that catalyzes the transfer of the ribosyl-5-phosphate group from 5-phospho-alpha-D-ribose 1-diphosphate (PRPP) to the N9 position of the 6-oxopurines guanine and xanthine to form the corresponding ribonucleotides GMP (guanosine 5'-monophosphate) and XMP (xanthosine 5'-monophosphate), with the release of PPi. To a lesser extent, also acts on hypoxanthine. This is Xanthine-guanine phosphoribosyltransferase from Salmonella choleraesuis (strain SC-B67).